The following is a 291-amino-acid chain: ATP synthase gamma chain (291 aa).

Belongs to the ATPase gamma chain family. In terms of assembly, F-type ATPases have 2 components, CF(1) - the catalytic core - and CF(0) - the membrane proton channel. CF(1) has five subunits: alpha(3), beta(3), gamma(1), delta(1), epsilon(1). CF(0) has three main subunits: a, b and c.

The protein localises to the cell inner membrane. Functionally, produces ATP from ADP in the presence of a proton gradient across the membrane. The gamma chain is believed to be important in regulating ATPase activity and the flow of protons through the CF(0) complex. The polypeptide is ATP synthase gamma chain (Methylobacillus flagellatus (strain ATCC 51484 / DSM 6875 / VKM B-1610 / KT)).